Here is a 551-residue protein sequence, read N- to C-terminus: Colicin E3 (551 aa).

Disordered regions lie at residues 1–74 (MSGG…SGGG), 243–269 (TLSP…NTRD), and 293–320 (PDQV…EAAE). The translocation (T) domain stretch occupies residues 1–315 (MSGGDGRGHN…RQQEWDATHP (315 aa)). The span at 20-35 (INGGPTGLGVGGGASD) shows a compositional bias: gly residues. Residues 35 to 39 (DGSGW) carry the Binds to TolB motif. Positions 36-45 (GSGWSSENNP) are enriched in low complexity. Over residues 46 to 74 (WGGGSGSGIHWGGGSGHGNGGGNGNSGGG) the composition is skewed to gly residues. Residues 296–320 (VKQRQDEENRRQQEWDATHPVEAAE) are compositionally biased toward basic and acidic residues. Residues 316–378 (VEAAERNYER…IAEIKQFNRF (63 aa)) adopt a coiled-coil conformation. The receptor-binding (R) domain stretch occupies residues 316-450 (VEAAERNYER…SAENNLNDEK (135 aa)). The Hairpin motif lies at 379 to 385 (AHDPMAG). Residues 386–450 (GHRMWQMAGL…SAENNLNDEK (65 aa)) are a coiled coil. A disordered region spans residues 406-505 (NKQAAFDAAA…KRWTGDKGRK (100 aa)). Residues 430 to 472 (ESRKKKEDKKRSAENNLNDEKNKPRKGFKDYGHDYHPAPKTEN) are compositionally biased toward basic and acidic residues. Residues 451–456 (NKPRKG) form a linker region. The interval 455-551 (KGFKDYGHDY…DPKRNIKKYL (97 aa)) is ribosome inactivating activity. The segment at 457–551 (FKDYGHDYHP…DPKRNIKKYL (95 aa)) is cytotoxic RNase (C) domain. The active-site Proton donor is the His-513. The active-site Proton acceptor is Glu-517. The segment at 517–551 (EGYRASDGQHLGSFDPKTGNQLKGPDPKRNIKKYL) is disordered. Residues 530–551 (FDPKTGNQLKGPDPKRNIKKYL) form a binding of immunity protein region. Arg-545 is a catalytic residue.

It belongs to the cloacin colicin family. As to quaternary structure, native colicin E3 is a 1:1 complex of A chain and protein B (cognate immunity protein, Im3); protein A is 1,000-fold more active in inactivating ribosomes than the native complex. The cytotoxic fragment (residues 456-551, C95) forms a 1:1 complex with Im3. The receptor-binding (R) domain binds obliquely to its receptor BtuB without displacing BtuB's central plug; binding unfolds the R domain. The N-terminal 83 residues (T83) bind OmpF; trimeric complexes with colicin E3, BtuB and OmpF can be cross-linked and immunoprecipitated. Probably inserts into the OmpF pore as an unfolded peptide and spans the OmpF pore. In a complex with T.thermophilus 70S ribosomes, cytotoxic fragment C96 contacts 16S rRNA, 23S rRNA, mRNA, P-site tRNA and ribosomal protein uS12.

Its subcellular location is the secreted. Functionally, colicins are polypeptide toxins produced by and active against E.coli and closely related bacteria. Cleaves 16S rRNA between adenosine-1492 and guanosine-1493 (E.coli 16S rRNA numbering), releasing a 49 nucleotide (nt) 'colicin' fragment. Inactivates 70S ribosomes or 30S subunits by endonucleolytically cleaving 16S RNA at a specific site about 50 nt from its C-terminus. Produces 5'-OH-guanosine and a 2',3'-cyclic phosphate adenosine. Mixing a susceptible (e.g. strain K12 / A19) and colicin E3 producing strain results in total protein translation inhibition within 11 minutes. Its activity is inhibited by cognate immunity protein Im3. Its function is as follows. Uses BtuB, the vitamin B transporter, as a receptor on the outer membrane; binds via the receptor (R) domain. Then the translocation domain (T) probably 'fishes' for its outer membrane translocon protein, OmpF. The N-terminal 83 residues (T83) can bind to and occlude OmpF channels. A complex of the cytotoxic C-terminal 96 residues (C96) plus the immunity protein does not occlude OmpF; upon complex separation from the immunity protein C96 becomes disordered and is able to bind OmpF. The N-terminus probably binds TolB and then reinserts into an empty pore of trimeric OmpF; the rest of the protein is pulled through OmpF and crosses the inner membrane, where the cytotoxic fragment is probably released by protease FtsH. This is Colicin E3 (ceaC) from Escherichia coli.